The chain runs to 342 residues: Ribosomal RNA small subunit methyltransferase C (342 aa).

This sequence belongs to the methyltransferase superfamily. RsmC family. As to quaternary structure, monomer.

It localises to the cytoplasm. It catalyses the reaction guanosine(1207) in 16S rRNA + S-adenosyl-L-methionine = N(2)-methylguanosine(1207) in 16S rRNA + S-adenosyl-L-homocysteine + H(+). Functionally, specifically methylates the guanine in position 1207 of 16S rRNA in the 30S particle. The sequence is that of Ribosomal RNA small subunit methyltransferase C from Salmonella paratyphi B (strain ATCC BAA-1250 / SPB7).